Reading from the N-terminus, the 391-residue chain is MTASSSLFSCSMHMEVLTPKISKWPKDFVSCHSKISYVETNYLKSTCYPISRFLCINNLSKCDKMIKTRQRDGIHCFSEGQKFQLDDVIEAQQFDRDILNAIFEIARDMENIERNSPESQILKGYLMATLFYEPSTRTRLSFESAMRRLGGEVLTTENAREFSSAAKGETLEDTIRTVEGYSDLIVLRHFESGAARRAAAIAGIPIVNAGDGPGQHPSQALLDVYTIEREIGKLDGIKVGLVGDLANGRTVRSLAYLLAKYKDVKIYFVSPEVVKMKDDIKDYLTSKGVDWEESSDLVEVASECDVVYQTRIQKERFGERLDLYEKARGKFIVNQNILNAMQRHAVIMHPLPRLDEITVDVDADPRAAYFRQAKYGLYIRMALLKLLLVGW.

A chloroplast-targeting transit peptide spans 1 to 69; that stretch reads MTASSSLFSC…SKCDKMIKTR (69 aa). Residues Arg-137 and Thr-138 each coordinate carbamoyl phosphate. Residues Arg-137 and Thr-138 each coordinate UMP. Residue Lys-167 coordinates L-aspartate. Carbamoyl phosphate-binding residues include Arg-188, His-216, and Gln-219. UMP contacts are provided by Arg-188 and His-216. 2 residues coordinate UMP: Arg-249 and Arg-311. L-aspartate contacts are provided by Arg-249 and Arg-311. 2 residues coordinate carbamoyl phosphate: Leu-351 and Pro-352.

This sequence belongs to the aspartate/ornithine carbamoyltransferase superfamily. ATCase family. As to quaternary structure, homotrimer.

It localises to the plastid. It is found in the chloroplast. The enzyme catalyses carbamoyl phosphate + L-aspartate = N-carbamoyl-L-aspartate + phosphate + H(+). It functions in the pathway pyrimidine metabolism; UMP biosynthesis via de novo pathway; (S)-dihydroorotate from bicarbonate: step 2/3. Feedback inhibited by UMP. Catalyzes the condensation of carbamoyl phosphate and aspartate to form carbamoyl aspartate and inorganic phosphate, the committed step in the de novo pyrimidine nucleotide biosynthesis pathway. The sequence is that of Aspartate carbamoyltransferase 3, chloroplastic (PYRB3) from Pisum sativum (Garden pea).